A 204-amino-acid polypeptide reads, in one-letter code: E2 ubiquitin-conjugating enzyme PEX4 (204 aa).

The region spanning 2–196 (SAEKRLLQEY…IEYYVGRYSI (195 aa)) is the UBC core domain. Cysteine 133 (glycyl thioester intermediate) is an active-site residue.

Belongs to the ubiquitin-conjugating enzyme family.

It is found in the peroxisome membrane. The catalysed reaction is S-ubiquitinyl-[E1 ubiquitin-activating enzyme]-L-cysteine + [E2 ubiquitin-conjugating enzyme]-L-cysteine = [E1 ubiquitin-activating enzyme]-L-cysteine + S-ubiquitinyl-[E2 ubiquitin-conjugating enzyme]-L-cysteine.. The protein operates within protein modification; protein ubiquitination. E2 ubiquitin-conjugating enzyme involved in peroxisome biosynthesis. Acts late in peroxisomal matrix protein import, after matrix protein translocation. Required for both monoubiquitination and polyubiquitination of coreceptor PEX20. polyubiquitination of PEX20 at conserved lysine 'Lys-19' near the N-terminus leads to its and proteasomal degradation, whereas a monoubiquitination at the conserved cysteine 'Cys-8' is essential for its recycling. This chain is E2 ubiquitin-conjugating enzyme PEX4, found in Komagataella phaffii (strain GS115 / ATCC 20864) (Yeast).